The following is a 210-amino-acid chain: Glutathione S-transferase P (210 aa).

The GST N-terminal domain occupies 2–81 (PPYTIVYFPV…HLGRSLGLYG (80 aa)). The residue at position 4 (Tyr-4) is a Phosphotyrosine; by EGFR. Glutathione is bound by residues Tyr-8, Arg-14, Trp-39, Lys-45, and 52 to 53 (QL). Thr-62 is modified (phosphothreonine). Residue 65 to 66 (QS) participates in glutathione binding. The region spanning 83-204 (DQKEAALVDM…SSPDHLNRPI (122 aa)) is the GST C-terminal domain. 2 positions are modified to N6-succinyllysine: Lys-103 and Lys-116. Residue Lys-128 is modified to N6-acetyllysine.

It belongs to the GST superfamily. Pi family. As to quaternary structure, homodimer. Interacts with CDK5. Present in kidney, lung, testis and placenta, very low levels in liver.

It localises to the cytoplasm. The protein resides in the mitochondrion. The protein localises to the nucleus. It catalyses the reaction RX + glutathione = an S-substituted glutathione + a halide anion + H(+). The catalysed reaction is prostaglandin J2 + glutathione = prostaglandin J2-S-(R)-glutathione. It carries out the reaction prostaglandin J2 + glutathione = prostaglandin J2-S-(S)-glutathione. The enzyme catalyses prostaglandin A2 + glutathione = prostaglandin A2-S-(S)-glutathione. It catalyses the reaction 11(S)-hydroxy-14(S),15(S)-epoxy-(5Z,8Z,12E)-eicosatrienoate + glutathione = (11S,15S)-dihydroxy-14(R)-S-glutathionyl-(5Z,8Z,12E)-eicosatrienoate. In terms of biological role, conjugation of reduced glutathione to a wide number of exogenous and endogenous hydrophobic electrophiles. Involved in the formation of glutathione conjugates of both prostaglandin A2 (PGA2) and prostaglandin J2 (PGJ2). Participates in the formation of novel hepoxilin regioisomers. Negatively regulates CDK5 activity via p25/p35 translocation to prevent neurodegeneration. The protein is Glutathione S-transferase P of Rattus norvegicus (Rat).